A 429-amino-acid chain; its full sequence is 3-phosphoshikimate 1-carboxyvinyltransferase (429 aa).

3-phosphoshikimate-binding residues include Lys23, Ser24, and Arg28. A phosphoenolpyruvate-binding site is contributed by Lys23. Gly95 and Arg123 together coordinate phosphoenolpyruvate. 4 residues coordinate 3-phosphoshikimate: Ser168, Gln170, Asp316, and Lys343. Position 170 (Gln170) interacts with phosphoenolpyruvate. Asp316 (proton acceptor) is an active-site residue. The phosphoenolpyruvate site is built by Arg347 and Arg389.

This sequence belongs to the EPSP synthase family. In terms of assembly, monomer.

Its subcellular location is the cytoplasm. It catalyses the reaction 3-phosphoshikimate + phosphoenolpyruvate = 5-O-(1-carboxyvinyl)-3-phosphoshikimate + phosphate. It participates in metabolic intermediate biosynthesis; chorismate biosynthesis; chorismate from D-erythrose 4-phosphate and phosphoenolpyruvate: step 6/7. Catalyzes the transfer of the enolpyruvyl moiety of phosphoenolpyruvate (PEP) to the 5-hydroxyl of shikimate-3-phosphate (S3P) to produce enolpyruvyl shikimate-3-phosphate and inorganic phosphate. This Bacillus cereus (strain G9842) protein is 3-phosphoshikimate 1-carboxyvinyltransferase.